We begin with the raw amino-acid sequence, 468 residues long: Argininosuccinate lyase (468 aa).

It belongs to the lyase 1 family. Argininosuccinate lyase subfamily.

Its subcellular location is the cytoplasm. It carries out the reaction 2-(N(omega)-L-arginino)succinate = fumarate + L-arginine. It participates in amino-acid biosynthesis; L-arginine biosynthesis; L-arginine from L-ornithine and carbamoyl phosphate: step 3/3. This chain is Argininosuccinate lyase, found in Gloeobacter violaceus (strain ATCC 29082 / PCC 7421).